The sequence spans 154 residues: MTGIREGEKELSLLGSKTEYRNDYAPEVLEAFTNKHQENDYWVRFNCPEFTSLCPITGQPDFATIYINYIPDVKMVESKSLKLYLFSFRNHGAFHEDCVNIIMKDLIALMQPRYIEVWGDFTPRGGISIVPFCNYGKPGSRYELLAEKRMETHH.

Catalysis depends on C54, which acts as the Thioimide intermediate. Catalysis depends on D61, which acts as the Proton donor. Substrate is bound by residues 76–78 (VES) and 95–96 (HE).

The protein belongs to the GTP cyclohydrolase I family. QueF type 1 subfamily.

Its subcellular location is the cytoplasm. It catalyses the reaction 7-aminomethyl-7-carbaguanine + 2 NADP(+) = 7-cyano-7-deazaguanine + 2 NADPH + 3 H(+). It participates in tRNA modification; tRNA-queuosine biosynthesis. In terms of biological role, catalyzes the NADPH-dependent reduction of 7-cyano-7-deazaguanine (preQ0) to 7-aminomethyl-7-deazaguanine (preQ1). This Porphyromonas gingivalis (strain ATCC 33277 / DSM 20709 / CIP 103683 / JCM 12257 / NCTC 11834 / 2561) protein is NADPH-dependent 7-cyano-7-deazaguanine reductase.